Reading from the N-terminus, the 123-residue chain is Small ribosomal subunit protein uS12 (123 aa).

Asp89 carries the post-translational modification 3-methylthioaspartic acid.

This sequence belongs to the universal ribosomal protein uS12 family. In terms of assembly, part of the 30S ribosomal subunit. Contacts proteins S8 and S17. May interact with IF1 in the 30S initiation complex.

With S4 and S5 plays an important role in translational accuracy. In terms of biological role, interacts with and stabilizes bases of the 16S rRNA that are involved in tRNA selection in the A site and with the mRNA backbone. Located at the interface of the 30S and 50S subunits, it traverses the body of the 30S subunit contacting proteins on the other side and probably holding the rRNA structure together. The combined cluster of proteins S8, S12 and S17 appears to hold together the shoulder and platform of the 30S subunit. This chain is Small ribosomal subunit protein uS12, found in Gluconacetobacter diazotrophicus (strain ATCC 49037 / DSM 5601 / CCUG 37298 / CIP 103539 / LMG 7603 / PAl5).